We begin with the raw amino-acid sequence, 501 residues long: MLLSLLVIIPFLSGIFSFFSFRFQKNIPRWIALTGMGLTLLTVIRIWFFEDYYTYQIQSYTHLSYQLILPWISSFGIQFHIAVDGFSIVMLFLTLFLGIIAILCSWNEIKKNEGFFYLNIMLVLMGTIGVFIAFDLFLFFFFWEIILIPMYFLISLWNQKKEDKKKCINIANKFFIYTQISGLIMLASILLLVLNYYINNKILTFNYDLLLIQPVDKSIEYIIMLGFFLAFIIKMPIVPFHGWLADFHERSPYCGAVDIIGALLKTAPYGLLRYNKMLFPNATEQFAPIAIFLGFLSMFYGAWVAFSQVNIKRLIAYSSISHMGLMLIAIYGGNEISFQGLIIQILSNSISTSALFILSGQIYKYLKTQDISEMGGLWTNIYWIPGFSLFFALSNLGIPGTGNFIGEFLILFGIFKEHPLVSIISTIGIIFSSIYSLNMIQKIYYGLSKHDFPKFFLNIKEFWISIVLIFALIFLGLIPQKILNISFESIHFIYNFSKRIQ.

The next 14 helical transmembrane spans lie at 1-21 (MLLS…FFSF), 30-50 (WIAL…WFFE), 86-106 (FSIV…LCSW), 115-134 (FFYL…FIAF), 139-156 (FFFF…LISL), 174-194 (FFIY…LLVL), 222-242 (IIML…PFHG), 252-272 (PYCG…YGLL), 286-306 (FAPI…WVAF), 314-331 (LIAY…IAIY), 341-363 (LIIQ…GQIY), 374-394 (MGGL…FALS), 420-440 (LVSI…LNMI), and 459-479 (IKEF…GLIP).

It belongs to the complex I subunit 4 family. In terms of assembly, composed of 13 different subunits. Subunits NuoA, H, J, K, L, M, N constitute the membrane sector of the complex.

The protein resides in the cell membrane. The enzyme catalyses a quinone + NADH + 5 H(+)(in) = a quinol + NAD(+) + 4 H(+)(out). In terms of biological role, NDH-1 shuttles electrons from NADH, via FMN and iron-sulfur (Fe-S) centers, to quinones in the respiratory chain. Couples the redox reaction to proton translocation (for every two electrons transferred, four hydrogen ions are translocated across the cytoplasmic membrane), and thus conserves the redox energy in a proton gradient. This is NADH-quinone oxidoreductase subunit M (nuoM) from Buchnera aphidicola subsp. Schizaphis graminum (strain Sg).